The following is a 274-amino-acid chain: Carboxy-S-adenosyl-L-methionine synthase (274 aa).

S-adenosyl-L-methionine is bound by residues Y59, 93–95 (GCS), 149–150 (DI), N164, and R231.

It belongs to the class I-like SAM-binding methyltransferase superfamily. Cx-SAM synthase family. As to quaternary structure, homodimer.

The catalysed reaction is prephenate + S-adenosyl-L-methionine = carboxy-S-adenosyl-L-methionine + 3-phenylpyruvate + H2O. In terms of biological role, catalyzes the conversion of S-adenosyl-L-methionine (SAM) to carboxy-S-adenosyl-L-methionine (Cx-SAM). In Psychrobacter sp. (strain PRwf-1), this protein is Carboxy-S-adenosyl-L-methionine synthase.